The sequence spans 541 residues: Halolysin-like extracellular serine protease Nep (541 aa).

Positions 1 to 33 (MTRDTNSNVGRRSVLKAASALGAFLGLGGVASA) form a signal peptide, tat-type signal. A propeptide spanning residues 34–121 (TPGREPGPKK…DNATYETLEV (88 aa)) is cleaved from the precursor. In terms of domain architecture, Peptidase S8 spans 130 to 405 (QYAPQQVNCE…YGRVDAELAV (276 aa)). Catalysis depends on charge relay system residues D157, H198, and S351. Residues 403 to 453 (LAVTTDPDNGDDDDDDDDDEDDPGDGECGDETNTATADGELSGGWGGNPSD) form a disordered region. Residues 410 to 432 (DNGDDDDDDDDDEDDPGDGECGD) are compositionally biased toward acidic residues.

The protein belongs to the peptidase S8 family. In terms of assembly, monomer. Exported by the Tat system. The position of the signal peptide cleavage has not been experimentally proven. After transport across the membrane, the propeptide is probably processed autocatalytically, yielding the mature fully active protease.

The protein resides in the secreted. Dependent on high salt concentrations for activity and stability. Strongly inhibited by the serine protease inhibitors diisopropyl fluorophosphate (DFP), phenylmethyl sulfonylfluoride (PMSF) and chymostatin. Also inhibited by denaturing agents such as SDS, urea, and HCl guanidinium. Activated by thiol-containing reducing agents such as dithiotreitol (DTT) and 2-mercaptoethanol. In terms of biological role, serine protease that hydrolyzes large proteins such as casein and gelatin. Cleaves preferentially at the carboxyl terminus of Phe, Tyr or Leu. Is also able to catalyze peptide synthesis under different salt concentrations in the presence of dimethyl sulfoxide (DMSO). The sequence is that of Halolysin-like extracellular serine protease Nep from Natrialba magadii.